The chain runs to 402 residues: Mitochondrial inner membrane protein OXA1 (402 aa).

A mitochondrion-targeting transit peptide spans 1 to 42 (MFKLTSRLVTSRFAASSRLATARTIVLPRPHPSWISFQAKRF). At 43-118 (NSTGPNANDV…PSDIIQHVLE (76 aa)) the chain is on the mitochondrial intermembrane side. The helical transmembrane segment at 119–139 (AVHVYSGLPWWGTIAATTILI) threads the bilayer. The Mitochondrial matrix segment spans residues 140 to 199 (RCLMFPLYVKSSDTVARNSHIKPELDALNNKLMSTTDLQQGQLVAMQRKKLLSSHGIKNR). Residues 200 to 220 (WLAAPMLQIPIALGFFNALRH) form a helical membrane-spanning segment. The Mitochondrial intermembrane segment spans residues 221–239 (MANYPVDGFANQGVAWFTD). The helical transmembrane segment at 240–260 (LTQADPYLGLQVITAAVFISF) threads the bilayer. The Mitochondrial matrix segment spans residues 261-275 (TRLGGETGAQQFSSP). A helical membrane pass occupies residues 276–292 (MKRLFTILPIISIPATM). Residues 293-297 (NLSSA) are Mitochondrial intermembrane-facing. Residues 298–316 (VVLYFAFNGAFSVLQTMIL) traverse the membrane as a helical segment. At 317-402 (RNKWVRSKLK…HKSNFINNKK (86 aa)) the chain is on the mitochondrial matrix side. A compositionally biased stretch (basic and acidic residues) spans 366-385 (RQLMQDNEKKLQESFKEKRQ). Residues 366-386 (RQLMQDNEKKLQESFKEKRQN) form a disordered region.

This sequence belongs to the OXA1/ALB3/YidC family. In terms of assembly, interacts with the large ribosome subunit of mitochondrial ribosome. Interacts directly with MRP20. Interacts with OXA1.

The protein resides in the mitochondrion inner membrane. Mitochondrial inner membrane insertase that mediates the insertion of both mitochondrion-encoded precursors and nuclear-encoded proteins from the matrix into the inner membrane. Links mitoribosomes with the inner membrane. Forms pores capable of accommodating translocating protein segments. Essential for the activity and assembly of cytochrome c oxidase. Plays a central role in the translocation and export of the N-terminal part of the COX2 protein into the mitochondrial intermembrane space. In Saccharomyces cerevisiae (strain ATCC 204508 / S288c) (Baker's yeast), this protein is Mitochondrial inner membrane protein OXA1.